A 314-amino-acid polypeptide reads, in one-letter code: MFNKKRYLQYPQVPPSLNPRASTSVVSLNGNEILLHHHDVISGYYLASNPQNLEPDALFNGFHHDVGGTNGDPLVLANTLAKKHTPKKDRHSKINRPQGPRDRRVRLSIGIARKFFDLQEMLGFDKPSKTLDWLLTKSKEAIKELVQSKSSKSNISNSPSECDQEVLSADLPYIGSSKGKAAVGLNSNKCKGGRDAVDLAKESRAKARARARERTKEKMCIKQLNQERNKSYEWNPSVLFQSKSSQQFEVSGPSTNYEELNQESIMIKRKLKQNHPSMFGFQPENATENWDYYSNFTSQSNQLCAILDQHKFIN.

The 59-residue stretch at 87–145 (KKDRHSKINRPQGPRDRRVRLSIGIARKFFDLQEMLGFDKPSKTLDWLLTKSKEAIKEL) folds into the TCP domain. The R domain occupies 201–218 (KESRAKARARARERTKEK).

It is found in the nucleus. Transcription regulator involved in the dorsovental asymmetry of flowers. Promotes dorsal identity. In Antirrhinum majus (Garden snapdragon), this protein is Transcription factor DICHOTOMA (DICH).